We begin with the raw amino-acid sequence, 142 residues long: Large ribosomal subunit protein uL11 (142 aa).

Belongs to the universal ribosomal protein uL11 family. Part of the ribosomal stalk of the 50S ribosomal subunit. Interacts with L10 and the large rRNA to form the base of the stalk. L10 forms an elongated spine to which L12 dimers bind in a sequential fashion forming a multimeric L10(L12)X complex. In terms of processing, one or more lysine residues are methylated.

Forms part of the ribosomal stalk which helps the ribosome interact with GTP-bound translation factors. The protein is Large ribosomal subunit protein uL11 of Shigella boydii serotype 18 (strain CDC 3083-94 / BS512).